A 401-amino-acid chain; its full sequence is Rho-N domain-containing protein 1, chloroplastic (401 aa).

A chloroplast-targeting transit peptide spans M1–R63. 2 disordered regions span residues P73 to R129 and K180 to V361. Polar residues-rich tracts occupy residues D102–P126, T210–A223, and P240–T265. Over residues Q266–E290 the composition is skewed to basic and acidic residues. Over residues L339–E358 the composition is skewed to acidic residues. A coiled-coil region spans residues L339–E371.

Homodimer or homomultimer. Part of a chloroplastic degradosome-like complex. Interacts with RNE.

The protein localises to the plastid. It is found in the chloroplast. Functionally, binds to and supports processing of specific plastid RNAs. Associates via its C-terminal Rho-N domain to single stranded regions of 16S and 23S rRNAs or to rbcL mRNAs. May be involved in targeting transcripts to RNases such as RNE or RNase J. The chain is Rho-N domain-containing protein 1, chloroplastic (RHON1) from Arabidopsis thaliana (Mouse-ear cress).